A 200-amino-acid polypeptide reads, in one-letter code: uncharacterized protein (200 aa).

Involved in osmoadaptation. This is an uncharacterized protein from Emericella nidulans (strain FGSC A4 / ATCC 38163 / CBS 112.46 / NRRL 194 / M139) (Aspergillus nidulans).